A 78-amino-acid polypeptide reads, in one-letter code: uncharacterized protein (78 aa).

The signal sequence occupies residues 1–27 (MQNSKTDMCAALWAVTGLVLNVAVRFA).

This is an uncharacterized protein from Dryophytes versicolor (chameleon treefrog).